We begin with the raw amino-acid sequence, 247 residues long: Probable transcriptional regulatory protein LBF_0056 (247 aa).

Belongs to the TACO1 family.

It localises to the cytoplasm. The chain is Probable transcriptional regulatory protein LBF_0056 from Leptospira biflexa serovar Patoc (strain Patoc 1 / Ames).